A 490-amino-acid chain; its full sequence is MSGNEDFIYDDNSSSSISNQTDGGGGGGSSNNNSGGNANNNNNEGDREQDRYLPIANIIRIMKKALPNNAKVAKDAKETVQDCVSEFISFITSEASDKCQQEKRKTINGEDIIAAMVSLGFENYVEPLKVYLLKYRETEKNSNNKRSPKKSESSSPPESPPLAHLDNSINSGYQPPPPPQQQQQQPPQVQQQQQQQQQQQQQQLQQQQQLQQHQQQQLQPQQQQQHLQQHLQQQQPQQQQQPPQQQQQQLTTTTTTTSTNNQQYQQQPQQQQQQQQQQQQQQQQQQQQQQQQQQQQQQQQQQQQQVQPPYILQQHNIQQPNVFLNQQAQQQQQQQQQQQQPMMNIQSHQQQFPQQHQIQQHLQQQHQHLQQIHNMQPPHQQMQFNQQFQMSQQIQMPQQFSNNNNNNNNNNNNNNNNNNNNNSNNNNNNNNNNNNNNNNPNNNINNNLNNSSNSLHNSGNSLHNSGNSGQIPPLYQQPYISTNPEYPSTS.

Residues 1 to 48 are disordered; sequence MSGNEDFIYDDNSSSSISNQTDGGGGGGSSNNNSGGNANNNNNEGDRE. Low complexity predominate over residues 30 to 43; the sequence is SNNNSGGNANNNNN. A DNA-binding region spans residues 53 to 59; that stretch reads LPIANII. The interval 80–91 is subunit association domain (SAD); sequence VQDCVSEFISFI. Disordered regions lie at residues 139–195 and 221–264; these read EKNS…QQQQ and QQQQ…NQQY. Positions 181–195 are enriched in low complexity; sequence QQQQQPPQVQQQQQQ. The stretch at 188-219 forms a coiled coil; it reads QVQQQQQQQQQQQQQQLQQQQQLQQHQQQQLQ. Positions 269–307 form a coiled coil; the sequence is QQQQQQQQQQQQQQQQQQQQQQQQQQQQQQQQQQQQQVQ. Disordered regions lie at residues 325-370 and 399-490; these read NQQA…QHLQ and QFSN…PSTS. The segment covering 399 to 468 has biased composition (low complexity); the sequence is QFSNNNNNNN…GNSLHNSGNS (70 aa). A compositionally biased stretch (polar residues) spans 478-490; the sequence is PYISTNPEYPSTS.

This sequence belongs to the NFYB/HAP3 subunit family. As to quaternary structure, heterotrimeric transcription factor composed of three components, nfyA, nfyB and nfyC. nfyB and nfyC must interact and dimerize for nfyA association and DNA binding.

It localises to the nucleus. Its function is as follows. Component of the NF-Y/HAP transcription factor complex. The NF-Y complex stimulates the transcription of various genes by recognizing and binding to a CCAAT motif in promoters. This is Nuclear transcription factor Y subunit beta (nfyB) from Dictyostelium discoideum (Social amoeba).